The primary structure comprises 503 residues: Structure-specific endonuclease subunit EME2 (503 aa).

3 stretches are compositionally biased toward basic and acidic residues: residues 1-10 (METKQERETG), 38-48 (ETNKPQTESRK), and 112-135 (AEEK…LEKI). The disordered stretch occupies residues 1 to 135 (METKQERETG…KAQKKELEKI (135 aa)). A nuclease-like domain; forms the post-nick DNA binding interface and is involved in DNA recognition and bending region spans residues 70–366 (QPDVEEKTKN…RPFRKHWEAQ (297 aa)). A coiled-coil region spans residues 103-151 (EQVAAEQEQAEEKKRQRELKRQEKAQKKELEKIERERRKETNLALKLLR). Positions 388 to 503 (GLPLTWRRQI…NPELVLDLNS (116 aa)) are helix-hairpin-helix (2HhH); forms the pre-nick DNA binding interface and is involved in DNA recognition and bending.

Belongs to the EME1/MMS4 family. Part of the heterodimeric MUS81-EME2 complex; the complex forms specifically during the DNA replication phase of the cell cycle.

The protein resides in the nucleus. Functionally, non-catalytic subunit of the structure-specific, heterodimeric DNA endonuclease MUS81-EME2 which is involved in the maintenance of genome stability. In the complex, EME2 is required for DNA cleavage, participating in DNA recognition and bending. MUS81-EME2 cleaves 3'-flaps and nicked Holliday junctions, and exhibit limited endonuclease activity with 5' flaps and nicked double-stranded DNAs. MUS81-EME2 which is active during the replication of DNA is more specifically involved in replication fork processing. Replication forks frequently encounter obstacles to their passage, including DNA base lesions, DNA interstrand cross-links, difficult-to-replicate sequences, transcription bubbles, or tightly bound proteins. One mechanism for the restart of a stalled replication fork involves nucleolytic cleavage mediated by the MUS81-EME2 endonuclease. By acting upon the stalled fork, MUS81-EME2 generates a DNA double-strand break (DSB) that can be repaired by homologous recombination, leading to the restoration of an active fork. MUS81-EME2 could also function in telomere maintenance. This Xenopus tropicalis (Western clawed frog) protein is Structure-specific endonuclease subunit EME2 (eme2).